Reading from the N-terminus, the 1162-residue chain is Integrin alpha-L (1162 aa).

Residues 1–23 form the signal peptide; it reads MSFRIAGPRLLLLGLQLFAKAWS. Residues 24–1088 lie on the Extracellular side of the membrane; the sequence is YNLDTRPTQS…DLIHEKEMLH (1065 aa). FG-GAP repeat units follow at residues 28–79 and 80–138; these read TRPT…FCQP and VSLH…GPML. Cysteine 70 and cysteine 77 are disulfide-bonded. The N-linked (GlcNAc...) asparagine glycan is linked to asparagine 86. 2 cysteine pairs are disulfide-bonded: cysteine 108/cysteine 126 and cysteine 147/cysteine 199. One can recognise a VWFA domain in the interval 153–325; the sequence is DLVFLFDGSQ…EKLKDLFTDL (173 aa). Residues asparagine 185 and asparagine 270 are each glycosylated (N-linked (GlcNAc...) asparagine). FG-GAP repeat units lie at residues 336–387, 390–443, 444–504, 505–561, and 565–625; these read NRQD…GATF, QEPL…GGRW, NQTQ…LFEM, VSEL…GLSP, and QRIQ…FSPE. A glycan (N-linked (GlcNAc...) asparagine) is linked at asparagine 444. Ca(2+) contacts are provided by aspartate 466, aspartate 468, aspartate 470, glutamate 474, aspartate 528, asparagine 530, aspartate 532, aspartate 536, aspartate 588, aspartate 592, and aspartate 596. A disulfide bridge connects residues cysteine 651 and cysteine 705. N-linked (GlcNAc...) asparagine glycans are attached at residues asparagine 668, asparagine 696, asparagine 724, and asparagine 728. The cysteines at positions 768 and 774 are disulfide-linked. Asparagine 777 carries N-linked (GlcNAc...) asparagine glycosylation. Cysteine 841 and cysteine 857 form a disulfide bridge. Residues asparagine 858, asparagine 881, asparagine 891, asparagine 900, and asparagine 928 are each glycosylated (N-linked (GlcNAc...) asparagine). 2 disulfides stabilise this stretch: cysteine 994–cysteine 1010 and cysteine 1018–cysteine 1049. N-linked (GlcNAc...) asparagine glycosylation occurs at asparagine 1057. A helical transmembrane segment spans residues 1089 to 1109; the sequence is VYVLSGIGGLVLLFLIFLALY. The Cytoplasmic segment spans residues 1110–1162; sequence KVGFFKRNLKEKMEADGGVPNGSPPEDTDPLAVPGEETKDMGCLEPLRESDKD. A GFFKR motif motif is present at residues 1112–1116; the sequence is GFFKR. Residues 1124-1162 form a disordered region; it reads ADGGVPNGSPPEDTDPLAVPGEETKDMGCLEPLRESDKD. Over residues 1145 to 1162 the composition is skewed to basic and acidic residues; the sequence is EETKDMGCLEPLRESDKD.

This sequence belongs to the integrin alpha chain family. As to quaternary structure, heterodimer of an alpha and a beta subunit. The ITGAL alpha subunit associates with the ITGB2 beta subunit. Interacts with THBD. Interacts with CD226. Post-translationally, in resting T-cells, up to 40% of surface ITGAL is constitutively phosphorylated. Phosphorylation causes conformational changes needed for ligand binding and is necessary for the activation by some physiological agents. Leukocytes.

Its subcellular location is the cell membrane. Functionally, integrin ITGAL/ITGB2 is a receptor for ICAM1, ICAM2, ICAM3 and ICAM4. Integrin ITGAL/ITGB2 is a receptor for F11R. Integrin ITGAL/ITGB2 is a receptor for the secreted form of ubiquitin-like protein ISG15; the interaction is mediated by ITGAL. Involved in a variety of immune phenomena including leukocyte-endothelial cell interaction, cytotoxic T-cell mediated killing, and antibody dependent killing by granulocytes and monocytes. Contributes to natural killer cell cytotoxicity. Involved in leukocyte adhesion and transmigration of leukocytes including T-cells and neutrophils. Acts as a platform at the immunological synapse to translate TCR engagement and density of the ITGAL ligand ICAM1 into graded adhesion. Required for generation of common lymphoid progenitor cells in bone marrow, indicating the role in lymphopoiesis. Integrin ITGAL/ITGB2 in association with ICAM3, contributes to apoptotic neutrophil phagocytosis by macrophages. In Mus musculus (Mouse), this protein is Integrin alpha-L.